Here is a 286-residue protein sequence, read N- to C-terminus: Transcription factor bHLH11 (286 aa).

Residues 1 to 34 (MDQPMKPKTCSESDFADDSSASSSSSSGQNLRGA) are disordered. The segment covering 18–27 (DSSASSSSSS) has biased composition (low complexity). A bHLH domain is found at 44–94 (AVCSQKAEREKLRRDKLKEQFLELGNALDPNRPKSDKASVLTDTIQMLKDV). Disordered stretches follow at residues 182–202 (EQQASVQQHSSSSADASMKQD) and 244–286 (QQDV…MLKP). 2 stretches are compositionally biased toward low complexity: residues 183–198 (QQASVQQHSSSSADAS) and 255–269 (SLTTTASSSNSYSLS). A compositionally biased stretch (polar residues) spans 270 to 279 (QAVQDSSPGT).

As to quaternary structure, homodimer. Expressed consitutively in roots, leaves, stems, and flowers.

Its subcellular location is the nucleus. The protein is Transcription factor bHLH11 (BHLH11) of Arabidopsis thaliana (Mouse-ear cress).